A 160-amino-acid polypeptide reads, in one-letter code: Periplasmic nitrate reductase, electron transfer subunit (160 aa).

The N-terminal stretch at 1–25 is a signal peptide; it reads MKTRIIFAALALAAAMPLLVSGVFA. His-73, Cys-87, Cys-90, His-91, His-108, Cys-127, Cys-130, and His-131 together coordinate heme c.

Belongs to the NapB family. Component of the periplasmic nitrate reductase NapAB complex composed of NapA and NapB. Binds 2 heme C groups per subunit.

The protein localises to the periplasm. Its function is as follows. Electron transfer subunit of the periplasmic nitrate reductase complex NapAB. Receives electrons from the membrane-anchored tetraheme c-type NapC protein and transfers these to NapA subunit, thus allowing electron flow between membrane and periplasm. Essential for periplasmic nitrate reduction with nitrate as the terminal electron acceptor. In Azospirillum brasilense, this protein is Periplasmic nitrate reductase, electron transfer subunit.